The following is an 84-amino-acid chain: CDC42 small effector protein 2 (84 aa).

Residues Cys-10 and Cys-11 are each lipidated (S-palmitoyl cysteine). Residues Ile-29–Gly-42 enclose the CRIB domain. Phosphoserine is present on residues Ser-43 and Ser-52.

It belongs to the CDC42SE/SPEC family. In terms of assembly, interacts with CDC42 (in GTP-bound form). Interacts weakly with RAC1 and not at all with RHOA.

The protein resides in the cytoplasm. Its subcellular location is the cytoskeleton. It is found in the cell membrane. The protein localises to the cell projection. It localises to the phagocytic cup. Functionally, probably involved in the organization of the actin cytoskeleton by acting downstream of CDC42, inducing actin filament assembly. Alters CDC42-induced cell shape changes. In activated T-cells, may play a role in CDC42-mediated F-actin accumulation at the immunological synapse. May play a role in early contractile events in phagocytosis in macrophages. The protein is CDC42 small effector protein 2 (CDC42SE2) of Bos taurus (Bovine).